A 351-amino-acid chain; its full sequence is LIM/homeobox protein ceh-14 (351 aa).

2 consecutive LIM zinc-binding domains span residues 46 to 105 (AICS…KFGT) and 105 to 169 (TKCS…ARDK). A DNA-binding region (homeobox) is located at residues 180 to 239 (NKRPRTTISAKSLETLKQAYQTSSKPARHVREQLASETGLDMRVVQVWFQNRRAKEKRLK). Basic and acidic residues predominate over residues 238–254 (LKKDAGRRWKSSNRAES). The segment at 238–268 (LKKDAGRRWKSSNRAESDSNSPIESINGQSP) is disordered. A compositionally biased stretch (polar residues) spans 255–268 (DSNSPIESINGQSP).

Interacts (via LIM zinc-binding domains 1 and 2) with lim-7 (via LID domain). May interact with itself. May interact with homeobox protein ceh-63. As to expression, expressed in the anterior AFDL/R sensory neurons and BDUL/R and ALA interneurons, and in PVT, PVQL/R, DVC, PVNL/R, PVWL/R, PVR, PHCL/R, PHAL/R and PHBL/R cells in the tail region.

Its subcellular location is the nucleus. In terms of biological role, probable transcription factor, modulating expression of helix-loop-helix protein mbr-1 and homeobox protein ceh-63, perhaps acting in concert with ceh-63. Binds to a motif including the sequence 5'-CTAAT-3' in regulatory promoter elements. Confers thermosensory function to neurons. Required for correct AFD-mediated thermotaxis. In concert with homeobox protein ttx-1, perhaps as components in a complex, specifies identity of AFD neurons, acting by synergistically regulating receptor-type guanylyl cyclase gcy-8, gcy-18 and other genes. Involved in postembryonic differentiation of the ALA neuron, and regulation of genes that contribute to behavioral quiescence, a sleep-like behavior mediated by ALA. Regulates its own expression and also that of homeodomain ceh-17, together forming an autoregulatory loop in the ALA neuron. Required for initial pathfinding of the ALA axons, but largely dispensable for axon migration. Involved in regulating postembryonic axon maintenance in the ventral nerve cord, acting in concert with LIM homeobox protein lim-6, via modulation of expression of immunoglobulin domain zig genes in the interneuron PVT. Plays a role in controlling the peptidergic identity of the BDU neurons, regulating expression of flp-10, nlp-1, and nlp-15, thereby modulating the harsh touch response. In Caenorhabditis elegans, this protein is LIM/homeobox protein ceh-14 (ceh-14).